Consider the following 214-residue polypeptide: Ubiquitin-conjugating enzyme E2 21 (214 aa).

The 148-residue stretch at 21–168 (ARVTRKCKEV…AVYWTSYFAN (148 aa)) folds into the UBC core domain. The active-site Glycyl thioester intermediate is C106. In terms of domain architecture, UBA spans 172-214 (DVEPDFNRKVGRLIEMGIRETEAIVYLSCNNWKLEQALQFIFD).

The protein belongs to the ubiquitin-conjugating enzyme family.

It catalyses the reaction S-ubiquitinyl-[E1 ubiquitin-activating enzyme]-L-cysteine + [E2 ubiquitin-conjugating enzyme]-L-cysteine = [E1 ubiquitin-activating enzyme]-L-cysteine + S-ubiquitinyl-[E2 ubiquitin-conjugating enzyme]-L-cysteine.. Its pathway is protein modification; protein ubiquitination. Its function is as follows. Acts with E3 ubiquitin-protein ligase trim-21 to catalyze the 'Lys-48'-linked polyubiquitination of ced-1, promoting its proteasomal degradation to maintain appropriate ced-1 levels for apoptotic cell clearance. The sequence is that of Ubiquitin-conjugating enzyme E2 21 (ubc-21) from Caenorhabditis elegans.